The chain runs to 130 residues: Small ribosomal subunit protein uS9 (130 aa).

It belongs to the universal ribosomal protein uS9 family.

In Exiguobacterium sibiricum (strain DSM 17290 / CCUG 55495 / CIP 109462 / JCM 13490 / 255-15), this protein is Small ribosomal subunit protein uS9.